Here is a 128-residue protein sequence, read N- to C-terminus: uncharacterized protein (128 aa).

It is found in the mitochondrion. This is an uncharacterized protein from Schizosaccharomyces pombe (strain 972 / ATCC 24843) (Fission yeast).